Here is a 419-residue protein sequence, read N- to C-terminus: Effector protein BipC (419 aa).

Disordered stretches follow at residues 62–91 and 338–402; these read VAGSGAQRVELARPKPDAQTRATDRRTVSG and LQSG…AKSQ. Composition is skewed to basic and acidic residues over residues 71-91 and 380-392; these read ELARPKPDAQTRATDRRTVSG and TRDEAAHRSREAA.

This sequence belongs to the SctB/SipC family.

It is found in the secreted. The protein is Effector protein BipC (bipC) of Burkholderia pseudomallei (strain 1106a).